Here is a 213-residue protein sequence, read N- to C-terminus: Orotate phosphoribosyltransferase (213 aa).

Lys-26 lines the 5-phospho-alpha-D-ribose 1-diphosphate pocket. 34 to 35 (FF) contributes to the orotate binding site. Residues 72-73 (YK), Arg-99, Lys-100, Lys-103, His-105, and 124-132 (DDVITAGTA) each bind 5-phospho-alpha-D-ribose 1-diphosphate. Positions 128 and 156 each coordinate orotate.

The protein belongs to the purine/pyrimidine phosphoribosyltransferase family. PyrE subfamily. In terms of assembly, homodimer. The cofactor is Mg(2+).

It catalyses the reaction orotidine 5'-phosphate + diphosphate = orotate + 5-phospho-alpha-D-ribose 1-diphosphate. Its pathway is pyrimidine metabolism; UMP biosynthesis via de novo pathway; UMP from orotate: step 1/2. Functionally, catalyzes the transfer of a ribosyl phosphate group from 5-phosphoribose 1-diphosphate to orotate, leading to the formation of orotidine monophosphate (OMP). This is Orotate phosphoribosyltransferase from Vibrio atlanticus (strain LGP32) (Vibrio splendidus (strain Mel32)).